A 93-amino-acid polypeptide reads, in one-letter code: YcgL domain-containing protein VV1058 (93 aa).

The YcgL domain maps to 1–84 (MLCSIYKSSK…PPENLLQQHK (84 aa)). The disordered stretch occupies residues 74–93 (PPPENLLQQHKERKAQQKND).

This Vibrio vulnificus (strain YJ016) protein is YcgL domain-containing protein VV1058.